The sequence spans 256 residues: MSELPGDVRAFLREHPSLRLQTDARKVRCILTGHELPCRLPELQVYTRGKKYQRLVRASPAFDYAEFEPHIVPSTKNPHQLFCKLTLRHINKCPEHVLRHTQGRRYQRALCKYEECQKQGVEYVPACLVHRRRRREDQMDGDGPRPREAFWEPTSSDEGGAASDDSMTDLYPPELFTRKDLGSTEDGDGTDDFLTDKEDEKAKPPREKATDEGRRETTVYRGLVQKRGKKQLGSLKKKFKSHHRKPKSFSSCKQPG.

The tract at residues 133–256 is disordered; the sequence is RRREDQMDGD…KSFSSCKQPG (124 aa). Basic and acidic residues predominate over residues 135-150; that stretch reads REDQMDGDGPRPREAF. The span at 156–165 shows a compositional bias: low complexity; it reads SDEGGAASDD. Residues 183 to 193 show a composition bias toward acidic residues; sequence STEDGDGTDDF. 2 positions are modified to phosphothreonine: threonine 190 and threonine 195. The segment covering 194-218 has biased composition (basic and acidic residues); it reads LTDKEDEKAKPPREKATDEGRRETT. The segment covering 224-247 has biased composition (basic residues); it reads VQKRGKKQLGSLKKKFKSHHRKPK.

It belongs to the SURF2 family.

The sequence is that of Surfeit locus protein 2 (SURF2) from Homo sapiens (Human).